The primary structure comprises 585 residues: ATP-dependent lipid A-core flippase (585 aa).

6 helical membrane passes run L23–I43, I64–T84, A140–Y160, W163–V183, I247–I267, and F273–L293. The ABC transmembrane type-1 domain occupies V27 to K308. The 237-residue stretch at L340 to L576 folds into the ABC transporter domain. Residue G374–S381 coordinates ATP.

The protein belongs to the ABC transporter superfamily. Lipid exporter (TC 3.A.1.106) family. As to quaternary structure, homodimer.

The protein resides in the cell inner membrane. The enzyme catalyses ATP + H2O + lipid A-core oligosaccharideSide 1 = ADP + phosphate + lipid A-core oligosaccharideSide 2.. Its function is as follows. Involved in lipopolysaccharide (LPS) biosynthesis. Translocates lipid A-core from the inner to the outer leaflet of the inner membrane. Transmembrane domains (TMD) form a pore in the inner membrane and the ATP-binding domain (NBD) is responsible for energy generation. This Pseudoalteromonas atlantica (strain T6c / ATCC BAA-1087) protein is ATP-dependent lipid A-core flippase.